Consider the following 92-residue polypeptide: Protein canopy homolog 1 (92 aa).

It belongs to the canopy family.

This is Protein canopy homolog 1 (CNPY1) from Homo sapiens (Human).